A 461-amino-acid chain; its full sequence is Nucleobindin-1 (461 aa).

Residues 1-26 (MPPSGPRGTLLLLPLLLLLLLRAVLA) form the signal peptide. Residues 42 to 51 (TESPDTGLYY) form an O-glycosylated at one site region. Phosphoserine; by FAM20C is present on Ser86. The residue at position 148 (Thr148) is a Phosphothreonine; by FAM20C. The stretch at 150–218 (EARDLELLIQ…QQRRHREHPK (69 aa)) forms a coiled coil. The DNA-binding element occupies 172 to 218 (HHEEFKRYEMLKEHERRRYLESLGEEQRKEAERKLEEQQRRHREHPK). A compositionally biased stretch (basic and acidic residues) spans 193–210 (SLGEEQRKEAERKLEEQQ). The interval 193 to 221 (SLGEEQRKEAERKLEEQQRRHREHPKVNV) is disordered. The segment at 228 to 321 (LKEVWEELDG…VTLEEFLAST (94 aa)) is binds to GNAI2 and GNAI3. 2 consecutive EF-hand domains span residues 240–275 (PNRFNPKTFFILHDINSDGVLDEQELEALFTKELEK) and 292–327 (ERLRMREHVMKNVDTNQDRLVTLEEFLASTQRKEFG). Residues Asp253, Asn255, Asp257, Glu264, Asp305, Asn307, Asp309, and Glu316 each contribute to the Ca(2+) site. The GBA motif lies at 303 to 333 (NVDTNQDRLVTLEEFLASTQRKEFGDTGEGW). A coiled-coil region spans residues 341–407 (AYTEEELRRF…QRKQQQQQQQ (67 aa)). The tract at residues 368 to 461 (LSQETEALGR…LPEVEVPQHL (94 aa)) is disordered. Position 369 is a phosphoserine; by FAM20C (Ser369). The segment covering 437-461 (DQKEVDTSEKKLLERLPEVEVPQHL) has biased composition (basic and acidic residues).

It belongs to the nucleobindin family. As to quaternary structure, interacts (via GBA motif) with guanine nucleotide-binding protein G(i) alpha subunits GNAI1, GNAI2 and GNAI3 with higher affinity for GNAI1 and GNAI3 than for GNAI2. Preferentially interacts with inactive rather than active GNAI3. Interaction with GNAI3 is inhibited when NUCB1 binds calcium, probably due to a conformational change which renders the GBA motif inaccessible. O-glycosylated. Expressed both in fetal and adult heart, lung, liver, kidney and brain, and in adult skeletal muscle, placenta and pancreas.

The protein resides in the golgi apparatus. It localises to the cis-Golgi network membrane. The protein localises to the cytoplasm. Its subcellular location is the secreted. In terms of biological role, major calcium-binding protein of the Golgi which may have a role in calcium homeostasis. Acts as a non-receptor guanine nucleotide exchange factor which binds to and activates alpha subunits of guanine nucleotide-binding proteins (G proteins). The protein is Nucleobindin-1 (NUCB1) of Homo sapiens (Human).